The sequence spans 101 residues: Movement protein (101 aa).

A helical transmembrane segment spans residues 30–50; that stretch reads EVAILSFVALICFYLLYLWVL. Residues 75–101 are disordered; that stretch reads VDRSNPIPNLPAPPSQGNPGPFVPGTG.

The protein belongs to the mastrevirus movement protein family. Interacts with the capsid protein (CP). Part of a MP-CP-viral DNA complex.

The protein resides in the host membrane. Its function is as follows. Involved in the viral transport within, and between cells. The polypeptide is Movement protein (Maize streak virus genotype A (isolate South Africa) (MSV)).